The following is a 297-amino-acid chain: PDZ domain-containing protein GIPC3 (297 aa).

Positions 97 to 177 constitute a PDZ domain; sequence EVEVTKTEDA…SQPFTLRLVQ (81 aa).

The protein belongs to the GIPC family. In terms of tissue distribution, expressed in adult lung, brain and testis. In the inner ear, it is expressed in the inner and outer hair cells of the organ of Corti. Also expressed in cochlear spiral ganglion neurons.

In terms of biological role, required for postnatal maturation of the hair bundle and long-term survival of hair cells and spiral ganglion. The chain is PDZ domain-containing protein GIPC3 (Gipc3) from Mus musculus (Mouse).